The sequence spans 427 residues: Serine hydroxymethyltransferase (427 aa).

(6S)-5,6,7,8-tetrahydrofolate-binding positions include L122 and 126-128 (GHL). K231 is subject to N6-(pyridoxal phosphate)lysine. Position 355-357 (355-357 (SPF)) interacts with (6S)-5,6,7,8-tetrahydrofolate.

Belongs to the SHMT family. As to quaternary structure, homodimer. It depends on pyridoxal 5'-phosphate as a cofactor.

It localises to the cytoplasm. The enzyme catalyses (6R)-5,10-methylene-5,6,7,8-tetrahydrofolate + glycine + H2O = (6S)-5,6,7,8-tetrahydrofolate + L-serine. It participates in one-carbon metabolism; tetrahydrofolate interconversion. The protein operates within amino-acid biosynthesis; glycine biosynthesis; glycine from L-serine: step 1/1. Functionally, catalyzes the reversible interconversion of serine and glycine with tetrahydrofolate (THF) serving as the one-carbon carrier. This reaction serves as the major source of one-carbon groups required for the biosynthesis of purines, thymidylate, methionine, and other important biomolecules. Also exhibits THF-independent aldolase activity toward beta-hydroxyamino acids, producing glycine and aldehydes, via a retro-aldol mechanism. The protein is Serine hydroxymethyltransferase of Nostoc punctiforme (strain ATCC 29133 / PCC 73102).